Here is a 169-residue protein sequence, read N- to C-terminus: Ribosome maturation factor RimM (169 aa).

Residues 97-169 (EDEYYWTDLV…TITADWGLDY (73 aa)) form the PRC barrel domain.

The protein belongs to the RimM family. In terms of assembly, binds ribosomal protein uS19.

It localises to the cytoplasm. Its function is as follows. An accessory protein needed during the final step in the assembly of 30S ribosomal subunit, possibly for assembly of the head region. Essential for efficient processing of 16S rRNA. May be needed both before and after RbfA during the maturation of 16S rRNA. It has affinity for free ribosomal 30S subunits but not for 70S ribosomes. This chain is Ribosome maturation factor RimM, found in Neisseria meningitidis serogroup B (strain ATCC BAA-335 / MC58).